The following is a 147-amino-acid chain: Ubiquitin-conjugating enzyme E2 D1 (147 aa).

Residues 1–147 form the UBC core domain; that stretch reads MALKRIQKEL…AREWTQKYAM (147 aa). The active-site Glycyl thioester intermediate is C85.

The protein belongs to the ubiquitin-conjugating enzyme family. In terms of assembly, component of a E3 ubiquitin ligase complex containing UBE2D1, SIAH1, CACYBP/SIP, SKP1, APC and TBL1X. Interacts with RNF11. Post-translationally, autoubiquitinated.

The protein localises to the cytoplasm. The catalysed reaction is S-ubiquitinyl-[E1 ubiquitin-activating enzyme]-L-cysteine + [E2 ubiquitin-conjugating enzyme]-L-cysteine = [E1 ubiquitin-activating enzyme]-L-cysteine + S-ubiquitinyl-[E2 ubiquitin-conjugating enzyme]-L-cysteine.. The enzyme catalyses S-ubiquitinyl-[E1 ubiquitin-activating enzyme]-L-cysteine + [acceptor protein]-L-lysine = [E1 ubiquitin-activating enzyme]-L-cysteine + N(6)-monoubiquitinyl-[acceptor protein]-L-lysine.. Its pathway is protein modification; protein ubiquitination. In terms of biological role, accepts ubiquitin from the E1 complex and catalyzes its covalent attachment to other proteins. In vitro catalyzes 'Lys-48'-linked polyubiquitination. Mediates the selective degradation of short-lived and abnormal proteins. Functions in the E6/E6-AP-induced ubiquitination of p53/TP53. Mediates ubiquitination of PEX5 and auto-ubiquitination of STUB1, TRAF6 and TRIM63/MURF1. Ubiquitinates STUB1-associated HSP90AB1 in vitro. Lacks inherent specificity for any particular lysine residue of ubiquitin. Essential for viral activation of IRF3. Mediates polyubiquitination of CYP3A4. The protein is Ubiquitin-conjugating enzyme E2 D1 (UBE2D1) of Bos taurus (Bovine).